A 280-amino-acid polypeptide reads, in one-letter code: Vitamin B12-binding protein (280 aa).

The N-terminal stretch at 1–27 (MMPLGLFPLPRAAAVLLISLLTLPAQA) is a signal peptide. A Fe/B12 periplasmic-binding domain is found at 30–277 (RVISLSPSTT…QMASIPTPVA (248 aa)). Tyrosine 57 is a binding site for cyanocob(III)alamin. A disulfide bridge links cysteine 190 with cysteine 266.

It belongs to the BtuF family. As to quaternary structure, the complex is composed of two ATP-binding proteins (BtuD), two transmembrane proteins (BtuC) and a solute-binding protein (BtuF).

It is found in the periplasm. Part of the ABC transporter complex BtuCDF involved in vitamin B12 import. Binds vitamin B12 and delivers it to the periplasmic surface of BtuC. The chain is Vitamin B12-binding protein from Yersinia pseudotuberculosis serotype O:3 (strain YPIII).